Reading from the N-terminus, the 842-residue chain is Pentatricopeptide repeat-containing protein At3g22690 (842 aa).

PPR repeat units follow at residues 98-132 (TCFM…GISP), 133-167 (DKYT…GYAK), 168-202 (DLFV…NVVS), 203-234 (WTSM…EVTP), 235-269 (NSVT…GIEV), 270-300 (NDLM…YGAS), 301-335 (NLDL…GVRP), 336-370 (DRIS…GFES), 371-401 (WDNI…MSNK), 402-436 (TVVT…NIVS), 437-463 (WNTI…MQSQ), 469-503 (DGVT…GIQL), 504-534 (DVRL…LTNR), 535-569 (DVSA…GLKP), 570-605 (DGVA…GVSP), and 606-636 (EDVH…MPME). The type E motif stretch occupies residues 641-716 (IWNSLLAACR…PPGTSSIQIR (76 aa)). The tract at residues 717–747 (GKTHEFTSGDESHPEMPNIEAMLDEVSQRAS) is type E(+) motif. The interval 748–842 (HLGHVPDLSN…QGKCSCGDFW (95 aa)) is type DYW motif.

This sequence belongs to the PPR family. PCMP-H subfamily.

In Arabidopsis thaliana (Mouse-ear cress), this protein is Pentatricopeptide repeat-containing protein At3g22690 (PCMP-H56).